The chain runs to 291 residues: uncharacterized protein (291 aa).

10 helical membrane-spanning segments follow: residues 1-21 (MHNLIFAILCSVAVSVLLKIA), 26-46 (IIIEQAIAFNYITAITFSYFL), 67-87 (PIFLALGLLLPSVFIIMSKAV), 95-115 (SDAAQRLSLFLPILAAFLIFH), 117-137 (TLSQSKIIGVVLAFIGLFCLL), 149-169 (FKGVLGLIGVWFGYGIIDILF), 179-199 (FPATLFISFSLAACVMFIYLF), 208-228 (SSVIGGIVLGVLNFFNILFYI), 241-261 (VFAGMNIGVICLGTITGALVF), and 270-290 (WLGIIFSLSAIFCLYYLDKII). One can recognise an EamA domain in the interval 107–138 (ILAAFLIFHETLSQSKIIGVVLAFIGLFCLLT).

It localises to the cell membrane. This is an uncharacterized protein from Haemophilus influenzae (strain ATCC 51907 / DSM 11121 / KW20 / Rd).